A 375-amino-acid polypeptide reads, in one-letter code: Succinyl-diaminopimelate desuccinylase (375 aa).

Position 66 (histidine 66) interacts with Zn(2+). The active site involves aspartate 68. Aspartate 99 is a Zn(2+) binding site. Glutamate 133 functions as the Proton acceptor in the catalytic mechanism. Positions 134, 162, and 348 each coordinate Zn(2+).

Belongs to the peptidase M20A family. DapE subfamily. Homodimer. The cofactor is Zn(2+). It depends on Co(2+) as a cofactor.

It catalyses the reaction N-succinyl-(2S,6S)-2,6-diaminopimelate + H2O = (2S,6S)-2,6-diaminopimelate + succinate. It participates in amino-acid biosynthesis; L-lysine biosynthesis via DAP pathway; LL-2,6-diaminopimelate from (S)-tetrahydrodipicolinate (succinylase route): step 3/3. Functionally, catalyzes the hydrolysis of N-succinyl-L,L-diaminopimelic acid (SDAP), forming succinate and LL-2,6-diaminopimelate (DAP), an intermediate involved in the bacterial biosynthesis of lysine and meso-diaminopimelic acid, an essential component of bacterial cell walls. In Pectobacterium atrosepticum (strain SCRI 1043 / ATCC BAA-672) (Erwinia carotovora subsp. atroseptica), this protein is Succinyl-diaminopimelate desuccinylase.